Reading from the N-terminus, the 99-residue chain is MKIAVVGDLDMTMGFRLAGLEDVYEVKNAEDALNTIRELDNRADIGLIITTERLGEEIRDSISNLKKFIVEIPDKNGAIVREHDPVKTLVRKAVGVELK.

Belongs to the V-ATPase F subunit family. Has multiple subunits with at least A(3), B(3), C, D, E, F, H, I and proteolipid K(x).

The protein localises to the cell membrane. Functionally, component of the A-type ATP synthase that produces ATP from ADP in the presence of a proton gradient across the membrane. The protein is A-type ATP synthase subunit F of Methanococcus aeolicus (strain ATCC BAA-1280 / DSM 17508 / OCM 812 / Nankai-3).